Consider the following 304-residue polypeptide: 5-hmdU DNA kinase 2 (304 aa).

Residues 260-304 (VGGQDPLAHRVPEKPQKASKTKNKAVAKEEPKTSSVSLLGLMRKA) form a disordered region. Over residues 266–275 (LAHRVPEKPQ) the composition is skewed to basic and acidic residues.

It belongs to the thymidylate kinase family. 5-hmdU DNA kinase subfamily.

The catalysed reaction is 5-hydroxymethyl-dUMP in DNA + ATP = 5-phosphomethyl-dUMP in DNA + ADP + H(+). Phosphorylates 5-hydroxymethyluracil (5hmdU) into 5-phosphomethyl-2'-deoxyuridine (5- PmdU) on DNA as a step in the pathway leading to thymidine hypermodifications in the viral genome. The phosphate is added internally to the DNA polymer. As a final result of the pathway of hypermodification, 5-aminoethoxy-2'-deoxymethyluridine (5-NeOmdU) substitutes for about 40% of the thymidines in the viral DNA. These modifications probably prevent degradation of viral genome by the host restriction-modification antiviral defense system. This chain is 5-hmdU DNA kinase 2, found in Salmonella typhi.